A 181-amino-acid polypeptide reads, in one-letter code: uncharacterized protein (181 aa).

This is an uncharacterized protein from Acidianus filamentous virus 2 (isolate Italy/Pozzuoli) (AFV-2).